The primary structure comprises 159 residues: SsrA-binding protein (159 aa).

Belongs to the SmpB family.

It is found in the cytoplasm. Required for rescue of stalled ribosomes mediated by trans-translation. Binds to transfer-messenger RNA (tmRNA), required for stable association of tmRNA with ribosomes. tmRNA and SmpB together mimic tRNA shape, replacing the anticodon stem-loop with SmpB. tmRNA is encoded by the ssrA gene; the 2 termini fold to resemble tRNA(Ala) and it encodes a 'tag peptide', a short internal open reading frame. During trans-translation Ala-aminoacylated tmRNA acts like a tRNA, entering the A-site of stalled ribosomes, displacing the stalled mRNA. The ribosome then switches to translate the ORF on the tmRNA; the nascent peptide is terminated with the 'tag peptide' encoded by the tmRNA and targeted for degradation. The ribosome is freed to recommence translation, which seems to be the essential function of trans-translation. The protein is SsrA-binding protein of Coxiella burnetii (strain CbuK_Q154) (Coxiella burnetii (strain Q154)).